The primary structure comprises 118 residues: Na(+)/H(+) antiporter subunit G1 (118 aa).

The next 3 helical transmembrane spans lie at isoleucine 9–leucine 29, alanine 41–isoleucine 61, and glutamine 70–isoleucine 90.

It belongs to the CPA3 antiporters (TC 2.A.63) subunit G family. In terms of assembly, may form a heterooligomeric complex that consists of seven subunits: mnhA1, mnhB1, mnhC1, mnhD1, mnhE1, mnhF1 and mnhG1.

The protein localises to the cell membrane. Its function is as follows. Mnh complex is a Na(+)/H(+) antiporter involved in Na(+) excretion. The chain is Na(+)/H(+) antiporter subunit G1 (mnhG1) from Staphylococcus saprophyticus subsp. saprophyticus (strain ATCC 15305 / DSM 20229 / NCIMB 8711 / NCTC 7292 / S-41).